A 92-amino-acid chain; its full sequence is Large ribosomal subunit protein bL25 (92 aa).

Belongs to the bacterial ribosomal protein bL25 family. In terms of assembly, part of the 50S ribosomal subunit; part of the 5S rRNA/L5/L18/L25 subcomplex. Contacts the 5S rRNA. Binds to the 5S rRNA independently of L5 and L18.

Functionally, this is one of the proteins that binds to the 5S RNA in the ribosome where it forms part of the central protuberance. The polypeptide is Large ribosomal subunit protein bL25 (Aliivibrio fischeri (strain ATCC 700601 / ES114) (Vibrio fischeri)).